The chain runs to 383 residues: BRISC and BRCA1-A complex member 2 (383 aa).

At Met1 the chain carries N-acetylmethionine. Ser2 carries the post-translational modification Phosphoserine. 2 UEV-like regions span residues 30-147 (DATN…TLLE) and 275-364 (IAAF…RAKA).

Belongs to the BABAM2 family. Component of the ARISC complex, at least composed of UIMC1/RAP80, ABRAXAS1, BRCC3/BRCC36, BABAM2 and BABAM1/NBA1. Component of the BRCA1-A complex, at least composed of BRCA1, BARD1, UIMC1/RAP80, ABRAXAS1, BRCC3/BRCC36, BABAM2 and BABAM1/NBA1. In the BRCA1-A complex, interacts directly with ABRAXAS1, BRCC3/BRCC36 and BABAM1/NBA1. Binds polyubiquitin. Component of the BRISC complex, at least composed of ABRAXAS2, BRCC3/BRCC36, BABAM2 and BABAM1/NBA1. Identified in a complex with SHMT2 and the other subunits of the BRISC complex. Component of the BRCA1/BRCA2 containing complex (BRCC), which also contains BRCA1, BRCA2, BARD1, BRCC3/BRCC36 and RAD51. BRCC is a ubiquitin E3 ligase complex that enhances cellular survival following DNA damage. May interact with FAS and TNFRSF1A. Expressed in all cell lines examined. Highly expressed in placenta.

It localises to the cytoplasm. It is found in the nucleus. In terms of biological role, component of the BRCA1-A complex, a complex that specifically recognizes 'Lys-63'-linked ubiquitinated histones H2A and H2AX at DNA lesions sites, leading to target the BRCA1-BARD1 heterodimer to sites of DNA damage at double-strand breaks (DSBs). The BRCA1-A complex also possesses deubiquitinase activity that specifically removes 'Lys-63'-linked ubiquitin on histones H2A and H2AX. In the BRCA1-A complex, it acts as an adapter that bridges the interaction between BABAM1/NBA1 and the rest of the complex, thereby being required for the complex integrity and modulating the E3 ubiquitin ligase activity of the BRCA1-BARD1 heterodimer. Component of the BRISC complex, a multiprotein complex that specifically cleaves 'Lys-63'-linked ubiquitin in various substrates. Within the BRISC complex, acts as an adapter that bridges the interaction between BABAM1/NBA1 and the rest of the complex, thereby being required for the complex integrity. The BRISC complex is required for normal mitotic spindle assembly and microtubule attachment to kinetochores via its role in deubiquitinating NUMA1. The BRISC complex plays a role in interferon signaling via its role in the deubiquitination of the interferon receptor IFNAR1; deubiquitination increases IFNAR1 activity by enhancing its stability and cell surface expression. Down-regulates the response to bacterial lipopolysaccharide (LPS) via its role in IFNAR1 deubiquitination. May play a role in homeostasis or cellular differentiation in cells of neural, epithelial and germline origins. May also act as a death receptor-associated anti-apoptotic protein, which inhibits the mitochondrial apoptotic pathway. May regulate TNF-alpha signaling through its interactions with TNFRSF1A; however these effects may be indirect. This is BRISC and BRCA1-A complex member 2 from Homo sapiens (Human).